The sequence spans 318 residues: NADH-ubiquinone oxidoreductase chain 1 (318 aa).

8 consecutive transmembrane segments (helical) span residues 2–22, 70–90, 100–120, 147–167, 171–191, 217–237, 254–276, and 294–314; these read FMINVLLLIIPILLAVAFLTL, MFIIAPILALTLALTMWIPLP, LGILFMLAMSSLAVYSILWSG, AIILLSVLLMSGSFTLSTLII, YLWLIFPSWPLAMMWFISTLA, AGPFALFFLAEYANIIMMNIF, LYSINFTMKTLLLTCSFLWIRAS, and LPLTLALCMWHVSLPIMLSSI.

This sequence belongs to the complex I subunit 1 family. Core subunit of respiratory chain NADH dehydrogenase (Complex I) which is composed of 45 different subunits.

It localises to the mitochondrion inner membrane. The catalysed reaction is a ubiquinone + NADH + 5 H(+)(in) = a ubiquinol + NAD(+) + 4 H(+)(out). Core subunit of the mitochondrial membrane respiratory chain NADH dehydrogenase (Complex I) which catalyzes electron transfer from NADH through the respiratory chain, using ubiquinone as an electron acceptor. Essential for the catalytic activity and assembly of complex I. This Equus asinus (Donkey) protein is NADH-ubiquinone oxidoreductase chain 1 (MT-ND1).